The following is a 615-amino-acid chain: Isocitrate dehydrogenase kinase/phosphatase (615 aa).

Residues 328 to 334 (APGIRGL) and K349 contribute to the ATP site. Residue D384 is part of the active site. Positions 595 to 615 (AEPPATPPVKQPDAGPARRVA) are disordered.

It belongs to the AceK family.

The protein localises to the cytoplasm. It catalyses the reaction L-seryl-[isocitrate dehydrogenase] + ATP = O-phospho-L-seryl-[isocitrate dehydrogenase] + ADP + H(+). Its function is as follows. Bifunctional enzyme which can phosphorylate or dephosphorylate isocitrate dehydrogenase (IDH) on a specific serine residue. This is a regulatory mechanism which enables bacteria to bypass the Krebs cycle via the glyoxylate shunt in response to the source of carbon. When bacteria are grown on glucose, IDH is fully active and unphosphorylated, but when grown on acetate or ethanol, the activity of IDH declines drastically concomitant with its phosphorylation. This chain is Isocitrate dehydrogenase kinase/phosphatase, found in Cupriavidus taiwanensis (strain DSM 17343 / BCRC 17206 / CCUG 44338 / CIP 107171 / LMG 19424 / R1) (Ralstonia taiwanensis (strain LMG 19424)).